Consider the following 225-residue polypeptide: MKLIVSVMPRSLEEAQALDDTRYLDADIIEWRADYLPKEAILQVAPAIFEKFAGRELVFTLRTRSEGGEIDLSPEEYIHLIKEVAQLYQPDYIDFEYYSYKDVFEEMLDFPNLVLSYHNFQETPENMMEILSELTILNPKLVKVAVMAHTEQDVLDLMNYTRGFKTLNPEQEYVTISMGKVGKVSRITADVTGSSWSFASLDEVSAPGQISLASMKKIREILDEA.

3-dehydroquinate is bound by residues serine 6, 30 to 32 (EWR), and arginine 62. The active-site Proton donor/acceptor is the histidine 118. Lysine 143 serves as the catalytic Schiff-base intermediate with substrate. Residues arginine 186, serine 205, and glutamine 209 each contribute to the 3-dehydroquinate site.

Belongs to the type-I 3-dehydroquinase family. In terms of assembly, homodimer.

It catalyses the reaction 3-dehydroquinate = 3-dehydroshikimate + H2O. Its pathway is metabolic intermediate biosynthesis; chorismate biosynthesis; chorismate from D-erythrose 4-phosphate and phosphoenolpyruvate: step 3/7. In terms of biological role, involved in the third step of the chorismate pathway, which leads to the biosynthesis of aromatic amino acids. Catalyzes the cis-dehydration of 3-dehydroquinate (DHQ) and introduces the first double bond of the aromatic ring to yield 3-dehydroshikimate. This chain is 3-dehydroquinate dehydratase, found in Streptococcus pneumoniae (strain P1031).